We begin with the raw amino-acid sequence, 124 residues long: Fluoride-specific ion channel FluC (124 aa).

A run of 4 helical transmembrane segments spans residues 4 to 24, 35 to 55, 67 to 87, and 100 to 120; these read FVLVATGGIFGSLARYVLSGV, YGTVLVNLLGSLLFGLVWGIL, LLLLTGFMGSLTTFSTLTYEG, and ALYIVGQTVAGIMLVWFGAGL. Na(+) is bound by residues G75 and T78.

It belongs to the fluoride channel Fluc/FEX (TC 1.A.43) family.

Its subcellular location is the cell inner membrane. The enzyme catalyses fluoride(in) = fluoride(out). With respect to regulation, na(+) is not transported, but it plays an essential structural role and its presence is essential for fluoride channel function. Fluoride-specific ion channel. Important for reducing fluoride concentration in the cell, thus reducing its toxicity. In Nitratidesulfovibrio vulgaris (strain ATCC 29579 / DSM 644 / CCUG 34227 / NCIMB 8303 / VKM B-1760 / Hildenborough) (Desulfovibrio vulgaris), this protein is Fluoride-specific ion channel FluC.